The primary structure comprises 128 residues: Nucleoside diphosphate kinase B (128 aa).

Position 1 is an N-acetylmethionine (M1). 5 residues coordinate ATP: K9, F39, T70, R81, and N91. H94 (pros-phosphohistidine intermediate) is an active-site residue.

It belongs to the NDK family. The cofactor is Mg(2+).

The protein resides in the cytoplasm. It is found in the nucleus. The protein localises to the cell projection. It localises to the lamellipodium. Its subcellular location is the ruffle. The enzyme catalyses a 2'-deoxyribonucleoside 5'-diphosphate + ATP = a 2'-deoxyribonucleoside 5'-triphosphate + ADP. The catalysed reaction is a ribonucleoside 5'-diphosphate + ATP = a ribonucleoside 5'-triphosphate + ADP. Functionally, major role in the synthesis of nucleoside triphosphates other than ATP. This Merluccius bilinearis (Silver hake) protein is Nucleoside diphosphate kinase B (nme2).